The following is an 88-amino-acid chain: Beta-insect excitatory toxin LqhIT1b (88 aa).

An N-terminal signal peptide occupies residues 1–18 (MKFFLLFLVVLPIMGVLG). Positions 20–83 (KNGYAVDSKG…ISDTTKKYCD (64 aa)) constitute an LCN-type CS-alpha/beta domain. 4 disulfide bridges follow: Cys34-Cys55, Cys40-Cys60, Cys44-Cys62, and Cys56-Cys82.

It belongs to the long (4 C-C) scorpion toxin superfamily. Sodium channel inhibitor family. Beta subfamily. In terms of tissue distribution, expressed by the venom gland.

The protein localises to the secreted. Excitatory insect toxins induce a spastic paralysis. They bind voltage-independently at site-4 of sodium channels (Nav) and shift the voltage of activation toward more negative potentials thereby affecting sodium channel activation and promoting spontaneous and repetitive firing. This Leiurus hebraeus (Hebrew deathstalker scorpion) protein is Beta-insect excitatory toxin LqhIT1b.